A 594-amino-acid chain; its full sequence is ATP-dependent lipid A-core flippase (594 aa).

Helical transmembrane passes span 35–55 (FVLA…IPKV), 64–84 (FGGS…GVAL), 135–155 (AVIF…ITLV), 161–181 (VVAL…VVAV), 262–282 (VTAF…MIQA), and 289–309 (IGGF…LKHL). The 283-residue stretch at 36-318 (VLAIIAMGLV…LADLNQPLQR (283 aa)) folds into the ABC transmembrane type-1 domain. An ABC transporter domain is found at 350-588 (LVFDNVGFRY…NGLYAGLHRI (239 aa)). Residue 384–391 (GPSGSGKT) coordinates ATP.

The protein belongs to the ABC transporter superfamily. Lipid exporter (TC 3.A.1.106) family. In terms of assembly, homodimer.

The protein localises to the cell inner membrane. The catalysed reaction is ATP + H2O + lipid A-core oligosaccharideSide 1 = ADP + phosphate + lipid A-core oligosaccharideSide 2.. Functionally, involved in lipopolysaccharide (LPS) biosynthesis. Translocates lipid A-core from the inner to the outer leaflet of the inner membrane. Transmembrane domains (TMD) form a pore in the inner membrane and the ATP-binding domain (NBD) is responsible for energy generation. The chain is ATP-dependent lipid A-core flippase from Cupriavidus metallidurans (strain ATCC 43123 / DSM 2839 / NBRC 102507 / CH34) (Ralstonia metallidurans).